The following is a 230-amino-acid chain: Voltage-gated hydrogen channel 1 (230 aa).

The Cytoplasmic portion of the chain corresponds to methionine 1–lysine 58. Residues phenylalanine 59–leucine 79 traverse the membrane as a helical segment. At leucine 80–isoleucine 96 the chain is on the extracellular side. Residues phenylalanine 97–phenylalanine 119 traverse the membrane as a helical segment. Residues arginine 120–lysine 127 are Cytoplasmic-facing. A helical transmembrane segment spans residues phenylalanine 128–serine 148. Residues arginine 149–alanine 155 are Extracellular-facing. The helical transmembrane segment at valine 156–valine 176 threads the bilayer. Residues serine 177–valine 226 are a coiled coil. Over serine 177–serine 230 the chain is Cytoplasmic.

It belongs to the hydrogen channel family. As to quaternary structure, homodimer.

Its subcellular location is the membrane. It is found in the cell membrane. In terms of biological role, mediates the voltage-dependent proton permeability of excitable membranes. Forms a proton-selective channel through which protons may pass in accordance with their electrochemical gradient. This Xenopus tropicalis (Western clawed frog) protein is Voltage-gated hydrogen channel 1 (hvcn1).